Consider the following 108-residue polypeptide: uncharacterized protein (108 aa).

The span at Met-1–Thr-14 shows a compositional bias: polar residues. A disordered region spans residues Met-1–Gly-31. Over residues Gly-15–Gly-31 the composition is skewed to basic and acidic residues.

It belongs to the SUI1 family.

This is an uncharacterized protein from Escherichia coli (strain K12).